The chain runs to 352 residues: Lipase chaperone (352 aa).

The helical transmembrane segment at 7 to 28 (LSLVAVVVAGGLTLYWRWPAAV) threads the bilayer.

It belongs to the lipase chaperone family.

The protein resides in the cell inner membrane. Functionally, may be involved in the folding of the extracellular lipase during its passage through the periplasm. The protein is Lipase chaperone (lifO) of Pseudomonas wisconsinensis.